A 520-amino-acid chain; its full sequence is Maturase K (520 aa).

This sequence belongs to the intron maturase 2 family. MatK subfamily.

It localises to the plastid. Its subcellular location is the chloroplast. Functionally, usually encoded in the trnK tRNA gene intron. Probably assists in splicing its own and other chloroplast group II introns. The polypeptide is Maturase K (Galanthus elwesii (Giant snowdrop)).